The chain runs to 193 residues: Auxin-induced protein 22D (193 aa).

A disordered region spans residues 16 to 68 (ATELRLGLPGSDEPEKRATARSNKRSSPEASDEESISNGSDVTKEDNVVPPAK). The EAR-like (transcriptional repression) signature appears at 19–23 (LRLGL). The PB1 domain maps to 97 to 184 (GMYVKVSMAG…SCKRLRIMKG (88 aa)).

This sequence belongs to the Aux/IAA family. As to quaternary structure, homodimers and heterodimers.

The protein localises to the nucleus. In terms of biological role, aux/IAA proteins are short-lived transcriptional factors that function as repressors of early auxin response genes at low auxin concentrations. Repression is thought to result from the interaction with auxin response factors (ARFs), proteins that bind to the auxin-responsive promoter element (AuxRE). Formation of heterodimers with ARF proteins may alter their ability to modulate early auxin response genes expression. In Vigna radiata var. radiata (Mung bean), this protein is Auxin-induced protein 22D (AUX22D).